We begin with the raw amino-acid sequence, 641 residues long: UPF0329 protein ECU11_0030 (641 aa).

Residues Arg358–Ala387 show a composition bias toward basic and acidic residues. Residues Arg358–Gly444 form a disordered region. Basic residues predominate over residues Lys435–Gly444.

It belongs to the UPF0329 family.

This Encephalitozoon cuniculi (strain GB-M1) (Microsporidian parasite) protein is UPF0329 protein ECU11_0030.